The sequence spans 432 residues: Muscle cell intermediate filament protein OV71 (432 aa).

The tract at residues 1 to 111 (KLIDELEEYK…RVHDQEISEL (111 aa)) is coil 1B. The 277-residue stretch at 1-277 (KLIDELEEYK…KMLEGEENRA (277 aa)) folds into the IF rod domain. The linker 12 stretch occupies residues 112–128 (QAMAARDTTSENREYFK). Positions 129–277 (NELSSAIRDI…KMLEGEENRA (149 aa)) are coil 2. The tail stretch occupies residues 278–432 (GLRQLVEQVV…HIQRSSHTIS (155 aa)). Positions 310-427 (SRTSFQRSAK…EERASHIQRS (118 aa)) constitute an LTD domain.

The protein belongs to the intermediate filament family.

This chain is Muscle cell intermediate filament protein OV71 (OV71), found in Onchocerca volvulus.